We begin with the raw amino-acid sequence, 178 residues long: Large ribosomal subunit protein bL25 (178 aa).

It belongs to the bacterial ribosomal protein bL25 family. CTC subfamily. In terms of assembly, part of the 50S ribosomal subunit; part of the 5S rRNA/L5/L18/L25 subcomplex. Contacts the 5S rRNA. Binds to the 5S rRNA independently of L5 and L18.

Its function is as follows. This is one of the proteins that binds to the 5S RNA in the ribosome where it forms part of the central protuberance. The protein is Large ribosomal subunit protein bL25 of Helicobacter pylori (strain J99 / ATCC 700824) (Campylobacter pylori J99).